The sequence spans 305 residues: Glycine--tRNA ligase alpha subunit (305 aa).

This sequence belongs to the class-II aminoacyl-tRNA synthetase family. As to quaternary structure, tetramer of two alpha and two beta subunits.

It localises to the cytoplasm. It catalyses the reaction tRNA(Gly) + glycine + ATP = glycyl-tRNA(Gly) + AMP + diphosphate. This is Glycine--tRNA ligase alpha subunit from Streptococcus pyogenes serotype M18 (strain MGAS8232).